The sequence spans 232 residues: Ribonuclease P protein component 3 (232 aa).

It belongs to the eukaryotic/archaeal RNase P protein component 3 family. As to quaternary structure, consists of a catalytic RNA component and at least 4-5 protein subunits.

It localises to the cytoplasm. The enzyme catalyses Endonucleolytic cleavage of RNA, removing 5'-extranucleotides from tRNA precursor.. In terms of biological role, part of ribonuclease P, a protein complex that generates mature tRNA molecules by cleaving their 5'-ends. The polypeptide is Ribonuclease P protein component 3 (Methanococcus maripaludis (strain C7 / ATCC BAA-1331)).